A 616-amino-acid polypeptide reads, in one-letter code: Dihydroxy-acid dehydratase (616 aa).

Asp-81 contributes to the Mg(2+) binding site. Cys-122 provides a ligand contact to [2Fe-2S] cluster. The Mg(2+) site is built by Asp-123 and Lys-124. Lys-124 carries the post-translational modification N6-carboxylysine. Cys-195 contacts [2Fe-2S] cluster. Glu-491 provides a ligand contact to Mg(2+). Ser-517 serves as the catalytic Proton acceptor.

Belongs to the IlvD/Edd family. As to quaternary structure, homodimer. [2Fe-2S] cluster is required as a cofactor. The cofactor is Mg(2+).

It carries out the reaction (2R)-2,3-dihydroxy-3-methylbutanoate = 3-methyl-2-oxobutanoate + H2O. It catalyses the reaction (2R,3R)-2,3-dihydroxy-3-methylpentanoate = (S)-3-methyl-2-oxopentanoate + H2O. The protein operates within amino-acid biosynthesis; L-isoleucine biosynthesis; L-isoleucine from 2-oxobutanoate: step 3/4. It participates in amino-acid biosynthesis; L-valine biosynthesis; L-valine from pyruvate: step 3/4. Functions in the biosynthesis of branched-chain amino acids. Catalyzes the dehydration of (2R,3R)-2,3-dihydroxy-3-methylpentanoate (2,3-dihydroxy-3-methylvalerate) into 2-oxo-3-methylpentanoate (2-oxo-3-methylvalerate) and of (2R)-2,3-dihydroxy-3-methylbutanoate (2,3-dihydroxyisovalerate) into 2-oxo-3-methylbutanoate (2-oxoisovalerate), the penultimate precursor to L-isoleucine and L-valine, respectively. This is Dihydroxy-acid dehydratase from Escherichia coli O81 (strain ED1a).